The sequence spans 23 residues: Potassium channel toxin kappa-KTx 1.2 (23 aa).

Intrachain disulfides connect cysteine 4/cysteine 22 and cysteine 8/cysteine 18. Cysteine 22 bears the Cysteine amide mark.

The protein belongs to the short scorpion toxin superfamily. Potassium channel inhibitor kappa-KTx family. Kappa-KTx 1 subfamily. In terms of processing, the two disulfide isomers globular (C1-C3, C2-C4) and beads (C1-C2, C3-C4) do not show activity on Kv10.1/KCNH1/EAG1. Expressed by the venom gland.

The protein localises to the secreted. Functionally, shows weak blocking activity on voltage-gated potassium channels Kv10.1/KCNH1/EAG1 (IC(50)=26 uM), Kv1.2/KCNA2 (Kd=150 uM), Kv1.3/KCNA3 (Kd=40 uM), Kv1.6/KCNA3 (16.6% inhibition at 40 uM toxin). The block is dose-dependent, voltage-independent, and reversible. Also shows a weak inhibitory activity on the plant pathogen F.culmorum growth (IC(50)=18.8-37.7 uM). In Chersonesometrus fulvipes (Indian black scorpion), this protein is Potassium channel toxin kappa-KTx 1.2.